The chain runs to 518 residues: UPF0053 inner membrane protein YoaE (518 aa).

Residues 1–13 are Cytoplasmic-facing; sequence MEFLMDPSIWAGL. The helical transmembrane segment at 14–34 threads the bilayer; it reads LTLVVLEIVLGIDNLVFIAIL. Topologically, residues 35-48 are periplasmic; the sequence is ADKLPPKQRDKARL. The chain crosses the membrane as a helical span at residues 49–69; sequence LGLSLALIMRLGLLSLISWMV. The Cytoplasmic segment spans residues 70–78; sequence TLTKPLFTV. A helical membrane pass occupies residues 79 to 99; sequence MDFSFSGRDLIMLFGGIFLLF. Residues 100 to 124 lie on the Periplasmic side of the membrane; that stretch reads KATTELHERLENRDHDSGHGKGYAS. The chain crosses the membrane as a helical span at residues 125–145; the sequence is FWVVVTQIVILDAVFSLDAVI. Over 146-149 the chain is Cytoplasmic; sequence TAVG. A helical membrane pass occupies residues 150–170; the sequence is MVNHLPVMMAAVVIAMAVMLL. Topologically, residues 171-184 are periplasmic; it reads ASKPLTRFVNQHPT. Residues 185 to 205 form a helical membrane-spanning segment; the sequence is VVVLCLSFLLMIGLSLVAEGF. A topological domain (cytoplasmic) is located at residue glycine 206. Residues 207-227 traverse the membrane as a helical segment; that stretch reads FHIPKGYLYAAIGFSIIIEVF. The Periplasmic segment spans residues 228–354; that stretch reads NQIARRNFIR…IGIVRAKELL (127 aa). 2 consecutive CBS domains span residues 304–363 and 367–427; these read MTPR…GVDV and ASAS…DADE. Residues 355–375 form a helical membrane-spanning segment; the sequence is VALEEGVDVAAIASASPAIIV. At 376-518 the chain is on the cytoplasmic side; the sequence is PETLDPINLL…KEQPAHDEDE (143 aa).

This sequence belongs to the UPF0053 family.

The protein localises to the cell inner membrane. The chain is UPF0053 inner membrane protein YoaE (yoaE) from Escherichia coli O157:H7.